The primary structure comprises 131 residues: Methylglyoxal synthase (131 aa).

The MGS-like domain occupies 1–131; the sequence is MKIALIAHDK…GDLDYRKLRK (131 aa). Substrate contacts are provided by residues H8, K12, 34 to 37, and 54 to 55; these read TGTT and SG. D60 serves as the catalytic Proton donor/acceptor. Residue H87 participates in substrate binding.

Belongs to the methylglyoxal synthase family.

The catalysed reaction is dihydroxyacetone phosphate = methylglyoxal + phosphate. Catalyzes the formation of methylglyoxal from dihydroxyacetone phosphate. The chain is Methylglyoxal synthase from Bacillus anthracis (strain A0248).